Consider the following 429-residue polypeptide: Protein S-Myc (429 aa).

Y36 carries the phosphotyrosine; by Tyr-kinases modification. The interval 301–325 (PLPYAEDARPLKKPRSQDPLGPLKC) is disordered. Positions 346–398 (ERRRNHNRMERQRRDIMRSSFLNLRDLVPELVHNEKAAKVVILKKATEYIHTL) constitute a bHLH domain. Positions 398–419 (LQTDESKLLVEREKLYERKQQL) are leucine-zipper.

In terms of assembly, efficient DNA binding requires dimerization with another bHLH protein.

The protein resides in the nucleus. Functionally, has apoptosis-inducing activity. The protein is Protein S-Myc (Mycs) of Rattus norvegicus (Rat).